We begin with the raw amino-acid sequence, 327 residues long: Lipoyl synthase (327 aa).

[4Fe-4S] cluster is bound by residues Cys-66, Cys-71, Cys-77, Cys-92, Cys-96, Cys-99, and Ser-306. Residues 78 to 295 (FSKGTATFMI…EKEAYELGFS (218 aa)) form the Radical SAM core domain.

It belongs to the radical SAM superfamily. Lipoyl synthase family. It depends on [4Fe-4S] cluster as a cofactor.

Its subcellular location is the cytoplasm. It carries out the reaction [[Fe-S] cluster scaffold protein carrying a second [4Fe-4S](2+) cluster] + N(6)-octanoyl-L-lysyl-[protein] + 2 oxidized [2Fe-2S]-[ferredoxin] + 2 S-adenosyl-L-methionine + 4 H(+) = [[Fe-S] cluster scaffold protein] + N(6)-[(R)-dihydrolipoyl]-L-lysyl-[protein] + 4 Fe(3+) + 2 hydrogen sulfide + 2 5'-deoxyadenosine + 2 L-methionine + 2 reduced [2Fe-2S]-[ferredoxin]. It participates in protein modification; protein lipoylation via endogenous pathway; protein N(6)-(lipoyl)lysine from octanoyl-[acyl-carrier-protein]: step 2/2. In terms of biological role, catalyzes the radical-mediated insertion of two sulfur atoms into the C-6 and C-8 positions of the octanoyl moiety bound to the lipoyl domains of lipoate-dependent enzymes, thereby converting the octanoylated domains into lipoylated derivatives. The sequence is that of Lipoyl synthase from Neisseria meningitidis serogroup A / serotype 4A (strain DSM 15465 / Z2491).